A 279-amino-acid polypeptide reads, in one-letter code: Topoisomerase I damage affected protein 4 (279 aa).

Residues 1–32 (MNANSTTTAIGLTSPFEKLSFFPHSSNLILAH) lie on the Extracellular side of the membrane. Residues 33 to 53 (LHEIIFSFVFYQLAFSVVAPF) form a helical membrane-spanning segment. The Cytoplasmic portion of the chain corresponds to 54–79 (LNKVVFRKHYTTIRDPLLKIDFNVHT). The TLC domain maps to 70–271 (LLKIDFNVHT…MIRIAKKLAK (202 aa)). A helical transmembrane segment spans residues 80–100 (VSMIQAVVSNTVLLPTLTTPM). Topologically, residues 101 to 110 (HYNVVTYTDS) are extracellular. Residues 111–131 (YSSMVSSLSAGYFIWDLTMCV) form a helical membrane-spanning segment. Over 132 to 135 (RYFK) the chain is Cytoplasmic. The chain crosses the membrane as a helical span at residues 136–156 (LYGLEFTGHAIGSVYVMLLSL). Residues 157–162 (RPFCQP) lie on the Extracellular side of the membrane. A helical membrane pass occupies residues 163–183 (WIGRFLIYEASTPFVNINWFI). At 184 to 192 (MQCNAKSKN) the chain is on the cytoplasmic side. A helical transmembrane segment spans residues 193–213 (SIPLWFNVVNGLLLMTVFFVV). The Extracellular portion of the chain corresponds to 214-238 (RICWGSIASALLFRQMWKVRDELPK). A helical membrane pass occupies residues 239–259 (FSAVTMMSLNIFMNLLNVLWF). The Cytoplasmic portion of the chain corresponds to 260-279 (KKMIRIAKKLAKPAPTSKLD).

Belongs to the TMEM56 family.

The protein resides in the membrane. This is Topoisomerase I damage affected protein 4 (TDA4) from Saccharomyces cerevisiae (strain ATCC 204508 / S288c) (Baker's yeast).